The sequence spans 337 residues: Phenylalanine--tRNA ligase alpha subunit (337 aa).

E258 lines the Mg(2+) pocket.

This sequence belongs to the class-II aminoacyl-tRNA synthetase family. Phe-tRNA synthetase alpha subunit type 1 subfamily. As to quaternary structure, tetramer of two alpha and two beta subunits. The cofactor is Mg(2+).

Its subcellular location is the cytoplasm. The catalysed reaction is tRNA(Phe) + L-phenylalanine + ATP = L-phenylalanyl-tRNA(Phe) + AMP + diphosphate + H(+). This chain is Phenylalanine--tRNA ligase alpha subunit, found in Burkholderia mallei (strain ATCC 23344).